Reading from the N-terminus, the 516-residue chain is NADH-quinone oxidoreductase subunit N (516 aa).

14 helical membrane-spanning segments follow: residues 12-32 (LLPA…DLLV), 37-57 (VTIS…VLVG), 81-101 (LVAV…GPLL), 108-128 (VGEY…LGAA), 131-151 (LITL…LVGL), 163-183 (VTFF…AALL), 213-233 (VAVA…PFHA), 246-266 (VAAY…LAVV), 274-294 (ITGL…NLVA), 303-323 (LLAW…GALA), 341-361 (VAYT…VVAL), 386-406 (VGLA…AGLF), 419-439 (GAAG…AYYL), and 491-511 (VVLA…QLVL).

This sequence belongs to the complex I subunit 2 family. NDH-1 is composed of 14 different subunits. Subunits NuoA, H, J, K, L, M, N constitute the membrane sector of the complex.

The protein localises to the cell membrane. The enzyme catalyses a quinone + NADH + 5 H(+)(in) = a quinol + NAD(+) + 4 H(+)(out). Functionally, NDH-1 shuttles electrons from NADH, via FMN and iron-sulfur (Fe-S) centers, to quinones in the respiratory chain. The immediate electron acceptor for the enzyme in this species is believed to be a menaquinone. Couples the redox reaction to proton translocation (for every two electrons transferred, four hydrogen ions are translocated across the cytoplasmic membrane), and thus conserves the redox energy in a proton gradient. The polypeptide is NADH-quinone oxidoreductase subunit N (Salinispora tropica (strain ATCC BAA-916 / DSM 44818 / JCM 13857 / NBRC 105044 / CNB-440)).